The following is a 459-amino-acid chain: Anthocyanidin 3-O-glucoside 2''-O-glucosyltransferase (459 aa).

Histidine 20 serves as the catalytic Proton acceptor. Residue histidine 20 participates in an anthocyanidin binding. The active-site Charge relay is aspartate 117. Residues threonine 138, valine 335, glutamine 337, histidine 352, tryptophan 355, serine 357, and glutamate 360 each contribute to the UDP-alpha-D-glucose site. An anthocyanidin is bound at residue glycine 375. UDP-alpha-D-glucose contacts are provided by aspartate 376 and glutamine 377.

This sequence belongs to the UDP-glycosyltransferase family.

It carries out the reaction an anthocyanidin 3-O-beta-D-glucoside + UDP-alpha-D-glucose = an anthocyanidin 3-O-sophoroside + UDP + 2 H(+). The protein operates within pigment biosynthesis; anthocyanin biosynthesis. Its function is as follows. Glycosyltransferase that mediates the glucosylation of anthocyanidin 3-O-glucosides to yield anthocyanidin 3-O-sophorosides. 3-O-sophoroside derivatives are required for the color of flowers. This Ipomoea purpurea (Common morning glory) protein is Anthocyanidin 3-O-glucoside 2''-O-glucosyltransferase (3GGT).